A 288-amino-acid polypeptide reads, in one-letter code: ATP synthase gamma chain (288 aa).

It belongs to the ATPase gamma chain family. As to quaternary structure, F-type ATPases have 2 components, CF(1) - the catalytic core - and CF(0) - the membrane proton channel. CF(1) has five subunits: alpha(3), beta(3), gamma(1), delta(1), epsilon(1). CF(0) has three main subunits: a, b and c.

Its subcellular location is the cell inner membrane. In terms of biological role, produces ATP from ADP in the presence of a proton gradient across the membrane. The gamma chain is believed to be important in regulating ATPase activity and the flow of protons through the CF(0) complex. The sequence is that of ATP synthase gamma chain from Rickettsia prowazekii (strain Madrid E).